Here is a 2462-residue protein sequence, read N- to C-terminus: Serine/threonine-protein kinase Wnk (2462 aa).

Disordered regions lie at residues 18-133 (NRAR…ASKS), 146-248 (NTLP…KSSS), and 365-461 (EDDV…DDDP). 2 stretches are compositionally biased toward polar residues: residues 29 to 58 (DGTT…NIQK) and 65 to 78 (NRSA…NPTS). Residues 94–124 (TLSAHTSTSSTTSIQSSPIEPASSLPTLNTT) show a composition bias toward low complexity. Positions 146 to 155 (NTLPGKTASS) are enriched in polar residues. 3 stretches are compositionally biased toward basic and acidic residues: residues 190-205 (QSRE…KIEP), 237-247 (DTKKMEARKSS), and 396-413 (QSEK…KAES). Residues 414–452 (SEASAEEAAVTGSSTDASASPLPSTSLVSTTSSATSITK) show a composition bias toward low complexity. Residues 471–729 (FKYDKEVGRG…CNELLESEFF (259 aa)) form the Protein kinase domain. Residues S481, 551–554 (TELM), and K601 contribute to the ATP site. D618 acts as the Proton acceptor in catalysis. 2 positions are modified to phosphoserine; by autocatalysis: S628 and S632. Disordered regions lie at residues 844 to 873 (LQKQ…DGVK), 893 to 923 (LALS…QPVQ), and 1006 to 1055 (PQQQ…LQQQ). Over residues 855-870 (VDEDEEEEEESEDEED) the composition is skewed to acidic residues. The span at 893–918 (LALSTNSVEPQQLSTRSNTSIPNSGI) shows a compositional bias: polar residues. Low complexity-rich tracts occupy residues 1006-1034 (PQQQ…QPQT) and 1041-1055 (HEQQ…LQQQ). Residues 1142–1178 (AQHQLQQLQQQQLQQQQLQQQQQIQQQQLQQQQLQQQ) adopt a coiled-coil conformation. Residues 1236 to 1251 (QGGQVTLSDAQQQQHP) are compositionally biased toward polar residues. Disordered stretches follow at residues 1236-1256 (QGGQ…FSAV), 1322-1382 (QQQQ…EQIS), 1418-1465 (GALE…PKLS), 1554-1578 (LTRQ…SDIT), 1615-1699 (NIPN…KDKK), 1762-1790 (DTSE…GNQG), 1828-1895 (QASP…SVGS), 1929-1966 (HEKQ…SINQ), and 2122-2229 (THVQ…FIQS). Residues 1559-1568 (STFRSHQRHR) show a composition bias toward basic residues. The segment covering 1627–1641 (STPPTTTSTMSSSST) has biased composition (low complexity). A compositionally biased stretch (polar residues) spans 1642–1674 (ASRDAPNSSNDVTIGSGSVSRKTSTASEYTSLS). Composition is skewed to polar residues over residues 1828–1852 (QASP…TKPN), 1861–1894 (SVGQ…NSVG), and 1943–1966 (SATS…SINQ). The segment covering 2125-2136 (QQPSNLQPQQQS) has biased composition (low complexity). Polar residues predominate over residues 2137-2160 (VHPNMTQQPQQTPLNGHPSMVNTL). Over residues 2161 to 2211 (QQQPPQQSLPMQTIQSQQQQHNQMPIISQQQQQQILMQQQQQQGSQQGSQQ) the composition is skewed to low complexity. Polar residues predominate over residues 2212–2229 (FNLPGTQQTHPQHQFIQS).

The protein belongs to the protein kinase superfamily. Ser/Thr protein kinase family. WNK subfamily. Mg(2+) serves as cofactor. Autophosphorylated. Autophosphorylation at Ser-628 and Ser-632 promotes its activity.

It is found in the cytoplasm. The catalysed reaction is L-seryl-[protein] + ATP = O-phospho-L-seryl-[protein] + ADP + H(+). The enzyme catalyses L-threonyl-[protein] + ATP = O-phospho-L-threonyl-[protein] + ADP + H(+). Activated in response to hyperosmotic stress: cell shrinkage promotes formation of a membraneless compartment that concentrates wnk-1 with its downstrem substrates. Activation requires autophosphorylation. Autophosphorylation and subsequent activation is inhibited by increases in intracellular Cl(-) or K(+). Its function is as follows. Serine/threonine-protein kinase component of the WNK-SPAK/OSR1 kinase cascade, which plays an important role in the regulation of electrolyte homeostasis and regulatory volume increase in response to hyperosmotic stress. Wnk mediates regulatory volume increase in response to hyperosmotic stress by acting as a molecular crowding sensor, which senses cell shrinkage and mediates formation of a membraneless compartment by undergoing liquid-liquid phase separation. The membraneless compartment concentrates Wnk with its substrate Fray, promoting Wnk-dependent phosphorylation and activation of downstream kinase Fray. Following activation, Fray catalyzes phosphorylation of ion cotransporters Ncc69 and Irk1, regulating their activity. Phosphorylation of Na-K-Cl cotransporter Ncc69 promotes its activation and ion influx. Involved in circadian rhythms in small ventral lateral (sLNv) pacemaker neurons: in the morning, Wnk activity is repressed by high levels of intracellular chloride; in contrast Wnk activation in the evening promotes the activation of the inwardly rectifying potassium channel Irk1 via Fray. Acts as a positive regulator of the canonical Wnt signaling pathway during wing disk development. This chain is Serine/threonine-protein kinase Wnk, found in Drosophila melanogaster (Fruit fly).